The following is a 255-amino-acid chain: NAD kinase (255 aa).

D44 acts as the Proton acceptor in catalysis. Residues 44–45 (DG), H49, 114–115 (NE), D144, A152, 155–160 (SAYNLS), and Q216 each bind NAD(+).

This sequence belongs to the NAD kinase family. A divalent metal cation is required as a cofactor.

It localises to the cytoplasm. The enzyme catalyses NAD(+) + ATP = ADP + NADP(+) + H(+). Its function is as follows. Involved in the regulation of the intracellular balance of NAD and NADP, and is a key enzyme in the biosynthesis of NADP. Catalyzes specifically the phosphorylation on 2'-hydroxyl of the adenosine moiety of NAD to yield NADP. In Rickettsia bellii (strain OSU 85-389), this protein is NAD kinase.